Consider the following 104-residue polypeptide: Cytochrome c6 (104 aa).

The first 20 residues, 1 to 20, serve as a signal peptide directing secretion; sequence MKSLLTFILTTIFCIQQVWA. Cys34, Cys37, His38, and Met78 together coordinate heme c.

Belongs to the cytochrome c family. PetJ subfamily. Monomer. In terms of processing, binds 1 heme c group covalently per subunit.

It localises to the plastid. The protein resides in the chloroplast thylakoid lumen. Functionally, functions as an electron carrier between membrane-bound cytochrome b6-f and photosystem I in oxygenic photosynthesis. The polypeptide is Cytochrome c6 (Cyanidioschyzon merolae (strain NIES-3377 / 10D) (Unicellular red alga)).